Reading from the N-terminus, the 399-residue chain is Phosphoglycerate kinase (399 aa).

Residues D22 to N24, R38, H61 to R64, R120, and R153 contribute to the substrate site. ATP is bound by residues K204, E326, and G352–T355.

This sequence belongs to the phosphoglycerate kinase family. In terms of assembly, monomer.

It is found in the cytoplasm. The catalysed reaction is (2R)-3-phosphoglycerate + ATP = (2R)-3-phospho-glyceroyl phosphate + ADP. The protein operates within carbohydrate degradation; glycolysis; pyruvate from D-glyceraldehyde 3-phosphate: step 2/5. In Citrifermentans bemidjiense (strain ATCC BAA-1014 / DSM 16622 / JCM 12645 / Bem) (Geobacter bemidjiensis), this protein is Phosphoglycerate kinase.